The following is a 557-amino-acid chain: Cytochrome P450 734A2 (557 aa).

Residues 13-35 form a helical membrane-spanning segment; it reads WATWRVAAVAAAAAVWVTMHVAA. Position 495 (Cys495) interacts with heme.

This sequence belongs to the cytochrome P450 family. Requires heme as cofactor. As to expression, expressed in roots, shoot apex, leaf sheaths and leaf blades.

It localises to the membrane. Functionally, cytochrome P450 involved in brassinosteroids (BRs) inactivation and regulation of BRs homeostasis. Is a multifunctional and multisubstrate enzyme that controls the endogenous bioactive BR content both by direct inactivation of castasterone (CS) and by decreasing the levels of BR precursors. Catalyzes the oxidation of carbon 22 hydroxylated BR intermediates to produce C26 oxidized metabolites. The protein is Cytochrome P450 734A2 (CYP734A2) of Oryza sativa subsp. japonica (Rice).